The following is a 935-amino-acid chain: Peptidyl-glycine alpha-amidating monooxygenase A (935 aa).

The signal sequence occupies residues 1-36 (MASLSSSFLVLFLLFQNSCYCFRSPLSVFKRYEEST). A peptidylglycine alpha-hydroxylating monooxygenase region spans residues 1 to 390 (MASLSSSFLV…KREEEEVLDQ (390 aa)). At 37 to 825 (RSLSNDCLGT…VQESSAGVSF (789 aa)) the chain is on the intragranular side. 5 disulfides stabilise this stretch: Cys-43-Cys-182, Cys-77-Cys-122, Cys-110-Cys-127, Cys-223-Cys-330, and Cys-289-Cys-311. Positions 103 and 104 each coordinate Cu(2+). The Cu(2+) site is built by His-168, His-238, His-240, and Met-310. The segment at 362-385 (HGHHHTEAEPEKNTGLQQPKREEE) is disordered. The segment at 391–712 (DVHLEEDTDW…SPSKAEHRSV (322 aa)) is peptidyl-alpha-hydroxyglycine alpha-amidating lyase. Arg-426 serves as a coordination point for a protein. NHL repeat units lie at residues 463–504 (SKVL…LGAG), 512–557 (LGRA…FSPN), and 565–609 (GEET…FHAE). 2 disulfides stabilise this stretch: Cys-526–Cys-547 and Cys-594–Cys-605. The a protein site is built by Tyr-546 and Arg-598. Residue Asn-658 is glycosylated (N-linked (GlcNAc...) asparagine). One copy of the NHL 4 repeat lies at 662–705 (GDILDTFIPARKNFDMPHDIAAADDGTVYVGDAHANAVWKFSPS). Residues 728–751 (FETHIRSRPKTNESVEKQTQEKQQ) are compositionally biased toward basic and acidic residues. Disordered regions lie at residues 728-764 (FETHIRSRPKTNESVEKQTQEKQQKQKNSAGVSTQEK) and 778-812 (QEKQNVVQESSAGVPTQEKQSVVQESSAGVSTQEK). Asn-739 carries an N-linked (GlcNAc...) asparagine glycan. The segment covering 755 to 764 (NSAGVSTQEK) has biased composition (polar residues). The chain crosses the membrane as a helical span at residues 826–846 (VLIITLLIIPIAVLIAIAIFI). The Cytoplasmic segment spans residues 847 to 935 (RWRKVRMYGG…PIPPAPVSSS (89 aa)). Positions 896-935 (KGFDRLSTEGSDQEKDDDDGSDSEEEYSAPPIPPAPVSSS) are disordered. Acidic residues predominate over residues 909-922 (EKDDDDGSDSEEEY). The span at 925 to 935 (PPIPPAPVSSS) shows a compositional bias: pro residues.

This sequence in the C-terminal section; belongs to the peptidyl-alpha-hydroxyglycine alpha-amidating lyase family. In the N-terminal section; belongs to the copper type II ascorbate-dependent monooxygenase family. Monomer. Zn(2+) is required as a cofactor. Cu(2+) serves as cofactor.

The protein localises to the cytoplasmic vesicle. The protein resides in the secretory vesicle membrane. The catalysed reaction is a [peptide]-C-terminal glycine + 2 L-ascorbate + O2 = a [peptide]-C-terminal (2S)-2-hydroxyglycine + 2 monodehydro-L-ascorbate radical + H2O. It catalyses the reaction a [peptide]-C-terminal (2S)-2-hydroxyglycine = a [peptide]-C-terminal amide + glyoxylate. Functionally, bifunctional enzyme that catalyzes amidation of the C-terminus of proteins. Alpha-amidation is present at the C-terminus of many endocrine hormones and neuropeptides and is required for their activity. C-terminal amidation also takes place in response to protein fragmentation triggered by oxidative stress, promoting degradation of amidated protein fragments by the proteasome. Alpha-amidation involves two sequential reactions, both of which are catalyzed by separate catalytic domains of the enzyme. The first step, catalyzed by peptidyl alpha-hydroxylating monooxygenase (PHM) domain, is the copper-, ascorbate-, and O2- dependent stereospecific hydroxylation (with S stereochemistry) at the alpha-carbon (C-alpha) of the C-terminal glycine of the peptidylglycine substrate. The second step, catalyzed by the peptidylglycine amidoglycolate lyase (PAL) domain, is the zinc-dependent cleavage of the N-C-alpha bond, producing the alpha-amidated peptide and glyoxylate. The polypeptide is Peptidyl-glycine alpha-amidating monooxygenase A (pam-a) (Xenopus laevis (African clawed frog)).